Consider the following 1171-residue polypeptide: ATP-dependent helicase/deoxyribonuclease subunit B (1171 aa).

Residues 1–343 form the UvrD-like helicase ATP-binding domain; sequence MSLRFVIGRA…LVAEENYRYR (343 aa). 8 to 15 provides a ligand contact to ATP; it reads GRAGSGKS. One can recognise a UvrD-like helicase C-terminal domain in the interval 281–587; the sequence is MEQPRFHSPA…QFANIPPSLD (307 aa). [4Fe-4S] cluster-binding residues include Cys805, Cys1129, Cys1132, and Cys1138.

Belongs to the helicase family. AddB/RexB type 1 subfamily. Heterodimer of AddA and AddB. The cofactor is Mg(2+). It depends on [4Fe-4S] cluster as a cofactor.

Its function is as follows. The heterodimer acts as both an ATP-dependent DNA helicase and an ATP-dependent, dual-direction single-stranded exonuclease. Recognizes the chi site generating a DNA molecule suitable for the initiation of homologous recombination. The AddB subunit has 5' -&gt; 3' nuclease activity but not helicase activity. This is ATP-dependent helicase/deoxyribonuclease subunit B from Bacillus thuringiensis subsp. konkukian (strain 97-27).